The sequence spans 398 residues: NADH-quinone oxidoreductase subunit D (398 aa).

It belongs to the complex I 49 kDa subunit family. As to quaternary structure, NDH-1 is composed of 14 different subunits. Subunits NuoB, C, D, E, F, and G constitute the peripheral sector of the complex.

It localises to the cell inner membrane. It catalyses the reaction a quinone + NADH + 5 H(+)(in) = a quinol + NAD(+) + 4 H(+)(out). NDH-1 shuttles electrons from NADH, via FMN and iron-sulfur (Fe-S) centers, to quinones in the respiratory chain. The immediate electron acceptor for the enzyme in this species is believed to be ubiquinone. Couples the redox reaction to proton translocation (for every two electrons transferred, four hydrogen ions are translocated across the cytoplasmic membrane), and thus conserves the redox energy in a proton gradient. In Bradyrhizobium sp. (strain ORS 278), this protein is NADH-quinone oxidoreductase subunit D.